The following is a 2115-amino-acid chain: Non-reducing polyketide synthase PFUR17_0229 (2115 aa).

Positions 8-246 are N-terminal acylcarrier protein transacylase (SAT) domain (SAT); the sequence is VLFGDQTVDP…ISLPITAAFH (239 aa). In terms of domain architecture, Ketosynthase family 3 (KS3) spans 367 to 796; it reads SGDIAIVGVA…GGNTSLVLED (430 aa). Catalysis depends on for beta-ketoacyl synthase activity residues C539, H674, and H713. Positions 895–1218 are malonyl-CoA:ACP transacylase (MAT) domain; it reads IFAFTGQGAQ…SISNAYNSGA (324 aa). The segment at 1279–1592 is product template (PT) domain; that stretch reads TTCLQKVESE…KRNILQSLLS (314 aa). An N-terminal hotdog fold region spans residues 1282–1413; sequence LQKVESETFT…CTVMYGDGQQ (132 aa). Residues 1282–1588 enclose the PKS/mFAS DH domain; that stretch reads LQKVESETFT…FQKMKRNILQ (307 aa). The active-site Proton acceptor; for dehydratase activity is H1315. Positions 1441 to 1588 are C-terminal hotdog fold; sequence VHRLLKEMIY…FQKMKRNILQ (148 aa). Residue D1501 is the Proton donor; for dehydratase activity of the active site. A disordered region spans residues 1594 to 1613; that stretch reads GHEETPPARPVPSKRTVQGS. In terms of domain architecture, Carrier 1 spans 1626–1703; sequence KAASGGFSNI…QLRNFFLDKV (78 aa). S1663 bears the O-(pantetheine 4'-phosphoryl)serine mark. A disordered region spans residues 1710–1742; that stretch reads FDDEESEMSSSTAGSTPGSSTSHGNQNTTVTTP. The segment covering 1718–1733 has biased composition (low complexity); the sequence is SSSTAGSTPGSSTSHG. One can recognise a Carrier 2 domain in the interval 1742–1819; it reads PAEPDVVAIL…DVQKALGVPS (78 aa). S1779 carries the O-(pantetheine 4'-phosphoryl)serine modification. The tract at residues 1861–2097 is thioesterase (TE) domain; that stretch reads LFLLPDGAGS…VVGGNHFSIM (237 aa).

Pantetheine 4'-phosphate is required as a cofactor.

The catalysed reaction is 6 malonyl-CoA + 2 acetyl-CoA + 5 H(+) = o-orsellinate depside + 6 CO2 + 8 CoA + H2O. Its function is as follows. Non-reducing polyketide synthase; part of a gene cluster that mediates the biosynthesis of a yet unidentified depside/depsidone compound. The first step in the pathway is performed by the PKS PFUR17_0229 that condenses 2 acetyl-CoA starter units with 6 malonyl-CoA units to produce lecanoric acid (LA), also known as orsellinate depside. The biosynthesis occurs via the formation of 2 orsellinate intermediates fused together by the C-terminal thioesterase (TE) domain that finally releases lecanoric acid. In addition to the PKS gene, the PFUR17 gene cluster contains closely linked genes encoding a cytochrome P-450 and a laccase (phenol oxidase), directly upstream and downstream respectively, so it is likely that lecanoric acid is an intermediate in a longer biosynthetic pathway. This chain is Non-reducing polyketide synthase PFUR17_0229, found in Pseudevernia furfuracea (Tree moss).